The sequence spans 118 residues: Small ribosomal subunit protein uS13 (118 aa).

Positions 91–118 (HRRGLPVRGQRTKTNARTRKGPRKPIKK) are disordered.

It belongs to the universal ribosomal protein uS13 family. Part of the 30S ribosomal subunit. Forms a loose heterodimer with protein S19. Forms two bridges to the 50S subunit in the 70S ribosome.

Its function is as follows. Located at the top of the head of the 30S subunit, it contacts several helices of the 16S rRNA. In the 70S ribosome it contacts the 23S rRNA (bridge B1a) and protein L5 of the 50S subunit (bridge B1b), connecting the 2 subunits; these bridges are implicated in subunit movement. Contacts the tRNAs in the A and P-sites. The protein is Small ribosomal subunit protein uS13 of Pectobacterium atrosepticum (strain SCRI 1043 / ATCC BAA-672) (Erwinia carotovora subsp. atroseptica).